A 155-amino-acid polypeptide reads, in one-letter code: Cardioactive peptide (155 aa).

Residues 1–23 (MRTSMRISLRLLALLACAICSQA) form the signal peptide. The propeptide occupies 24–49 (SLERENNEGTNMANHKLSGVIQWKYE). A disulfide bridge links Cys54 with Cys60. Residue Cys60 is modified to Cysteine amide. A propeptide spanning residues 64 to 155 (RTYPSYPPFS…MQQLEERESK (92 aa)) is cleaved from the precursor. Positions 135–155 (NKQKMLQNEKEMQQLEERESK) are disordered. Basic and acidic residues predominate over residues 141-155 (QNEKEMQQLEERESK).

Central nervous system; most neurons exhibit coexpression with Burs.

It localises to the secreted. Cardioregulatory neurohormone that increases heart beat rate during adult wing inflation; has no effect on beat amplitude. The effect of CCAP is both ino- and chronotropic. The protein is Cardioactive peptide of Drosophila melanogaster (Fruit fly).